The chain runs to 195 residues: Urease accessory protein UreG (195 aa).

Glycine 9–threonine 16 serves as a coordination point for GTP.

This sequence belongs to the SIMIBI class G3E GTPase family. UreG subfamily. Homodimer. UreD, UreF and UreG form a complex that acts as a GTP-hydrolysis-dependent molecular chaperone, activating the urease apoprotein by helping to assemble the nickel containing metallocenter of UreC. The UreE protein probably delivers the nickel.

It is found in the cytoplasm. Facilitates the functional incorporation of the urease nickel metallocenter. This process requires GTP hydrolysis, probably effectuated by UreG. The chain is Urease accessory protein UreG from Aliarcobacter butzleri (strain RM4018) (Arcobacter butzleri).